The chain runs to 369 residues: Cytokine receptor common subunit gamma (369 aa).

The first 22 residues, 1–22 (MLKLLLSPRSFLVLQLLLLRAG), serve as a signal peptide directing secretion. The Extracellular segment spans residues 23-263 (WSSKVLMSSA…ENPSLFALEA (241 aa)). C62 and C72 are disulfide-bonded. N-linked (GlcNAc...) asparagine glycans are attached at residues N71, N75, N84, and N96. Residues C102 and C115 are joined by a disulfide bond. A Fibronectin type-III domain is found at 156–254 (APENLTLSNL…VHWGSHTVEE (99 aa)). N-linked (GlcNAc...) asparagine glycosylation is found at N159 and N164. The WSXWS motif motif lies at 238 to 242 (WSKWS). A helical membrane pass occupies residues 264–284 (VLIPVGTMGLIITLIFVYCWL). Topologically, residues 285-369 (ERMPPIPPIK…PPCYSLKPEA (85 aa)) are cytoplasmic. The Box 1 motif motif lies at 286–294 (RMPPIPPIK).

This sequence belongs to the type I cytokine receptor family. Type 5 subfamily. The gamma subunit is common to the IL2, IL4, IL7, IL15, IL21 and probably also the IL13 receptors. Interacts with SHB upon interleukin stimulation. Interacts with IL9.

It is found in the cell membrane. The protein localises to the cell surface. Common subunit for the receptors for a variety of interleukins. Probably in association with IL15RA, involved in the stimulation of neutrophil phagocytosis by IL15. The chain is Cytokine receptor common subunit gamma (Il2rg) from Mus musculus (Mouse).